The primary structure comprises 298 residues: O-glycoside alpha-1,2-mannosyltransferase homolog 6 (298 aa).

Glu220 acts as the Nucleophile in catalysis.

Belongs to the glycosyltransferase 15 family.

It localises to the cytoplasm. Its subcellular location is the nucleus. Probable mannosyltransferase involved in O-glycosylation of cell wall and secreted proteins. In Schizosaccharomyces pombe (strain 972 / ATCC 24843) (Fission yeast), this protein is O-glycoside alpha-1,2-mannosyltransferase homolog 6 (omh6).